The sequence spans 56 residues: Large ribosomal subunit protein bL32 (56 aa).

Basic residues predominate over residues Met-1–Arg-16. A disordered region spans residues Met-1–Ser-28.

The protein belongs to the bacterial ribosomal protein bL32 family.

The polypeptide is Large ribosomal subunit protein bL32 (Vibrio campbellii (strain ATCC BAA-1116)).